The chain runs to 251 residues: Uridylate kinase (251 aa).

11-14 contacts ATP; it reads KLSG. The tract at residues 19 to 24 is involved in allosteric activation by GTP; sequence GNQGFG. Residue glycine 53 participates in UMP binding. The ATP site is built by glycine 54 and arginine 58. UMP is bound by residues aspartate 73 and 134 to 141; that span reads TGNPYFTT. ATP contacts are provided by threonine 161, tyrosine 167, and aspartate 170.

It belongs to the UMP kinase family. Homohexamer.

Its subcellular location is the cytoplasm. It carries out the reaction UMP + ATP = UDP + ADP. It functions in the pathway pyrimidine metabolism; CTP biosynthesis via de novo pathway; UDP from UMP (UMPK route): step 1/1. Allosterically activated by GTP. Inhibited by UTP. Its function is as follows. Catalyzes the reversible phosphorylation of UMP to UDP. This Protochlamydia amoebophila (strain UWE25) protein is Uridylate kinase.